A 321-amino-acid chain; its full sequence is NADH-ubiquinone oxidoreductase chain 1 (321 aa).

The next 8 helical transmembrane spans lie at isoleucine 9–leucine 29, isoleucine 75–methionine 95, leucine 106–glycine 126, threonine 151–phenylalanine 171, histidine 177–alanine 197, valine 219–phenylalanine 239, proline 256–tryptophan 276, and tyrosine 297–glycine 317.

The protein belongs to the complex I subunit 1 family.

The protein localises to the mitochondrion inner membrane. The enzyme catalyses a ubiquinone + NADH + 5 H(+)(in) = a ubiquinol + NAD(+) + 4 H(+)(out). Functionally, core subunit of the mitochondrial membrane respiratory chain NADH dehydrogenase (Complex I) that is believed to belong to the minimal assembly required for catalysis. Complex I functions in the transfer of electrons from NADH to the respiratory chain. The immediate electron acceptor for the enzyme is believed to be ubiquinone. This chain is NADH-ubiquinone oxidoreductase chain 1 (MT-ND1), found in Lycodon semicarinatus (Ryukyu odd-tooth snake).